The primary structure comprises 863 residues: Nitrate reductase [NADH] (863 aa).

Cys-137 is a binding site for Mo-molybdopterin. Residues 484-559 (KKYVTKAMLE…LEQFYIAELA (76 aa)) enclose the Cytochrome b5 heme-binding domain. His-519 and His-542 together coordinate heme. Residues 602-719 (KKQKAAELKE…KGPIGHFHYD (118 aa)) form the FAD-binding FR-type domain. Residues 659–662 (RAYT), 676–680 (VVKIY), Phe-688, 693–695 (KFS), and Thr-746 each bind FAD.

This sequence belongs to the nitrate reductase family. In terms of assembly, homodimer. It depends on FAD as a cofactor. The cofactor is Mo-molybdopterin. Requires heme as cofactor.

It catalyses the reaction nitrite + NAD(+) + H2O = nitrate + NADH + H(+). Its function is as follows. Nitrate reductase is a key enzyme involved in the first step of nitrate assimilation in plants, fungi and bacteria. This chain is Nitrate reductase [NADH], found in Ulva prolifera (Green seaweed).